The sequence spans 292 residues: uncharacterized protein (292 aa).

The next 4 helical transmembrane spans lie at 17–37 (LFYTFVLVAWLFIGMILFPAL), 135–155 (LIAVLYALIGTPLFLTVIGQL), 166–186 (TTLWIVTIVYIFISAVIYDIV), and 216–236 (FHGVLPYCIVVLGLALITALY). Residues 267–292 (EKSEDKKSIVTSRIEEENEDEISDYE) are disordered. Residues 282–292 (EENEDEISDYE) are compositionally biased toward acidic residues.

The protein resides in the membrane. This is an uncharacterized protein from Caenorhabditis elegans.